A 193-amino-acid polypeptide reads, in one-letter code: Potassium-transporting ATPase KdpC subunit (193 aa).

Residues 7–27 (PMIVIFAVLAALTGLAYPAVM) form a helical membrane-spanning segment.

It belongs to the KdpC family. As to quaternary structure, the system is composed of three essential subunits: KdpA, KdpB and KdpC.

It localises to the cell inner membrane. Functionally, part of the high-affinity ATP-driven potassium transport (or Kdp) system, which catalyzes the hydrolysis of ATP coupled with the electrogenic transport of potassium into the cytoplasm. This subunit acts as a catalytic chaperone that increases the ATP-binding affinity of the ATP-hydrolyzing subunit KdpB by the formation of a transient KdpB/KdpC/ATP ternary complex. This Paraburkholderia phymatum (strain DSM 17167 / CIP 108236 / LMG 21445 / STM815) (Burkholderia phymatum) protein is Potassium-transporting ATPase KdpC subunit.